A 309-amino-acid chain; its full sequence is Extracellular agarase (309 aa).

The tat-type signal signal peptide spans 1–30; that stretch reads MVNRRDLIKWSAVALGAGAGLAGPAPAAHA. Residues 33–309 enclose the GH16 domain; sequence LEWEQYPVPA…YRWVRTYQAV (277 aa). Glu-155 serves as the catalytic Nucleophile. Glu-160 serves as the catalytic Proton donor.

Belongs to the glycosyl hydrolase 16 family. Post-translationally, predicted to be exported by the Tat system. The position of the signal peptide cleavage has been experimentally proven.

The protein localises to the secreted. The enzyme catalyses Hydrolysis of (1-&gt;4)-beta-D-galactosidic linkages in agarose, giving the tetramer as the predominant product.. The protein is Extracellular agarase (dagA) of Streptomyces coelicolor (strain ATCC BAA-471 / A3(2) / M145).